Consider the following 609-residue polypeptide: Aspartate--tRNA(Asp/Asn) ligase (609 aa).

Glu-175 lines the L-aspartate pocket. The segment at 199 to 202 (QQFK) is aspartate. L-aspartate-binding residues include Arg-221 and His-468. 221-223 (RDE) serves as a coordination point for ATP. Residue Glu-502 participates in ATP binding. L-aspartate is bound at residue Arg-509. Residue 554-557 (GIDR) participates in ATP binding.

It belongs to the class-II aminoacyl-tRNA synthetase family. Type 1 subfamily. In terms of assembly, homodimer.

The protein localises to the cytoplasm. It catalyses the reaction tRNA(Asx) + L-aspartate + ATP = L-aspartyl-tRNA(Asx) + AMP + diphosphate. Functionally, aspartyl-tRNA synthetase with relaxed tRNA specificity since it is able to aspartylate not only its cognate tRNA(Asp) but also tRNA(Asn). Reaction proceeds in two steps: L-aspartate is first activated by ATP to form Asp-AMP and then transferred to the acceptor end of tRNA(Asp/Asn). This chain is Aspartate--tRNA(Asp/Asn) ligase, found in Caulobacter sp. (strain K31).